The following is a 510-amino-acid chain: MSTTTATPAGADDTVAAARTYQVRTFGCQMNVHDSERLSGLLEDAGYVRFDEAGRPEGSDAPVEPDVVVFNTCAVRENADNKLYGNLGHLAPVKERRPGMQIAVGGCLAQKDRGEIVRKAPWVDVVFGTHNVGSLPVLLERARHNAEAQVEILESLETFPSTLPTRRESPYAAWVSISVGCNNTCTFCIVPALRGKEKDRRPGDVLAEIEALVGEGVLEVTLLGQNVNTYGVEFGDKLAFGKLLRATGGIEGLERVRFTSPHPSSFTDDVVDAMAETPNVMPSLHMPLQSGSDRVLKAMRRSYRQSRFLGIIDRVRSSIPDAAITTDIIVGFPGETDEDFEQTLHVVEQARFSSAFTFQYSPRPGTPAATMGDQIPKRVVQERYERLTALQDRITYEDNQAQTGRTLEVLVAEGEGRKDAATRRLSGRAPDNRLVHFALPEGAQAPRPGDVATVTVTRGAPHYLEADDVSGFAVRRTRAGDAWEARQARPEPESTGPRPVGLGLPTLRRA.

One can recognise an MTTase N-terminal domain in the interval Arg19–His144. 6 residues coordinate [4Fe-4S] cluster: Cys28, Cys73, Cys107, Cys181, Cys185, and Cys188. The 231-residue stretch at Arg167–Glu397 folds into the Radical SAM core domain. In terms of domain architecture, TRAM spans Gln400–Ser470. A compositionally biased stretch (basic and acidic residues) spans Ala482–Pro492. Positions Ala482–Ala510 are disordered.

Belongs to the methylthiotransferase family. MiaB subfamily. In terms of assembly, monomer. Requires [4Fe-4S] cluster as cofactor.

The protein resides in the cytoplasm. It catalyses the reaction N(6)-dimethylallyladenosine(37) in tRNA + (sulfur carrier)-SH + AH2 + 2 S-adenosyl-L-methionine = 2-methylsulfanyl-N(6)-dimethylallyladenosine(37) in tRNA + (sulfur carrier)-H + 5'-deoxyadenosine + L-methionine + A + S-adenosyl-L-homocysteine + 2 H(+). Its function is as follows. Catalyzes the methylthiolation of N6-(dimethylallyl)adenosine (i(6)A), leading to the formation of 2-methylthio-N6-(dimethylallyl)adenosine (ms(2)i(6)A) at position 37 in tRNAs that read codons beginning with uridine. In Kineococcus radiotolerans (strain ATCC BAA-149 / DSM 14245 / SRS30216), this protein is tRNA-2-methylthio-N(6)-dimethylallyladenosine synthase.